Reading from the N-terminus, the 117-residue chain is Immunoglobulin heavy variable 5-10-1 (117 aa).

Positions 1–19 (MGSTAILALLLAVLQGVCA) are cleaved as a signal peptide. The segment at 20–44 (EVQLVQSGAEVKKPGESLRISCKGS) is framework-1. The 98-residue stretch at 20–117 (EVQLVQSGAE…SDTAMYYCAR (98 aa)) folds into the Ig-like domain. Cysteines 41 and 115 form a disulfide. The complementarity-determining-1 stretch occupies residues 45–52 (GYSFTSYW). Residues 53–69 (ISWVRQMPGKGLEWMGR) form a framework-2 region. Positions 70–77 (IDPSDSYT) are complementarity-determining-2. The interval 78–115 (NYSPSFQGHVTISADKSISTAYLQWSSLKASDTAMYYC) is framework-3. Residues 116–117 (AR) form a complementarity-determining-3 region.

In terms of assembly, immunoglobulins are composed of two identical heavy chains and two identical light chains; disulfide-linked.

It localises to the secreted. Its subcellular location is the cell membrane. Its function is as follows. V region of the variable domain of immunoglobulin heavy chains that participates in the antigen recognition. Immunoglobulins, also known as antibodies, are membrane-bound or secreted glycoproteins produced by B lymphocytes. In the recognition phase of humoral immunity, the membrane-bound immunoglobulins serve as receptors which, upon binding of a specific antigen, trigger the clonal expansion and differentiation of B lymphocytes into immunoglobulins-secreting plasma cells. Secreted immunoglobulins mediate the effector phase of humoral immunity, which results in the elimination of bound antigens. The antigen binding site is formed by the variable domain of one heavy chain, together with that of its associated light chain. Thus, each immunoglobulin has two antigen binding sites with remarkable affinity for a particular antigen. The variable domains are assembled by a process called V-(D)-J rearrangement and can then be subjected to somatic hypermutations which, after exposure to antigen and selection, allow affinity maturation for a particular antigen. The protein is Immunoglobulin heavy variable 5-10-1 of Homo sapiens (Human).